The following is a 407-amino-acid chain: Phosphopentomutase (407 aa).

Residues Asp-11, Asp-305, His-310, Asp-346, His-347, and His-358 each contribute to the Mn(2+) site.

The protein belongs to the phosphopentomutase family. Mn(2+) is required as a cofactor.

The protein resides in the cytoplasm. It carries out the reaction 2-deoxy-alpha-D-ribose 1-phosphate = 2-deoxy-D-ribose 5-phosphate. The catalysed reaction is alpha-D-ribose 1-phosphate = D-ribose 5-phosphate. Its pathway is carbohydrate degradation; 2-deoxy-D-ribose 1-phosphate degradation; D-glyceraldehyde 3-phosphate and acetaldehyde from 2-deoxy-alpha-D-ribose 1-phosphate: step 1/2. Functionally, isomerase that catalyzes the conversion of deoxy-ribose 1-phosphate (dRib-1-P) and ribose 1-phosphate (Rib-1-P) to deoxy-ribose 5-phosphate (dRib-5-P) and ribose 5-phosphate (Rib-5-P), respectively. In Legionella pneumophila subsp. pneumophila (strain Philadelphia 1 / ATCC 33152 / DSM 7513), this protein is Phosphopentomutase.